The sequence spans 328 residues: Arabinose 5-phosphate isomerase KdsD (328 aa).

The 144-residue stretch at 41-184 folds into the SIS domain; sequence ACEKMFNCTG…AVALLKARGF (144 aa). Residues 75-76, H82, H88, 114-123, and 148-150 each bind substrate; these read GT, ALIPVLKRLH, and KVP. H82 contributes to the Zn(2+) binding site. In terms of domain architecture, CBS 1 spans 210-268; it reads MHTGDEIPHVNKHATLRDALLEITRKNLGMTVICDESMKIDGIFTDGDLRRVFDMGGDM. E275 is a substrate binding site. The CBS 2 domain maps to 277–328; sequence MTPGGIRVRPGILAVDALNLMQSRHITSVLVADGDQLLGVLHMHDLLRAGVV.

It belongs to the SIS family. GutQ/KpsF subfamily. In terms of assembly, homotetramer.

The enzyme catalyses D-arabinose 5-phosphate = D-ribulose 5-phosphate. The protein operates within carbohydrate biosynthesis; 3-deoxy-D-manno-octulosonate biosynthesis; 3-deoxy-D-manno-octulosonate from D-ribulose 5-phosphate: step 1/3. It functions in the pathway bacterial outer membrane biogenesis; lipopolysaccharide biosynthesis. Involved in the biosynthesis of 3-deoxy-D-manno-octulosonate (KDO), a unique 8-carbon sugar component of lipopolysaccharides (LPSs). Catalyzes the reversible aldol-ketol isomerization between D-ribulose 5-phosphate (Ru5P) and D-arabinose 5-phosphate (A5P). The protein is Arabinose 5-phosphate isomerase KdsD (kdsD) of Salmonella typhimurium (strain LT2 / SGSC1412 / ATCC 700720).